A 1392-amino-acid polypeptide reads, in one-letter code: DNA-directed RNA polymerase subunit beta'' (1392 aa).

Residues cysteine 224, cysteine 295, cysteine 302, and cysteine 305 each contribute to the Zn(2+) site.

This sequence belongs to the RNA polymerase beta' chain family. RpoC2 subfamily. In plastids the minimal PEP RNA polymerase catalytic core is composed of four subunits: alpha, beta, beta', and beta''. When a (nuclear-encoded) sigma factor is associated with the core the holoenzyme is formed, which can initiate transcription. The cofactor is Zn(2+).

The protein localises to the plastid. Its subcellular location is the chloroplast. It carries out the reaction RNA(n) + a ribonucleoside 5'-triphosphate = RNA(n+1) + diphosphate. Its function is as follows. DNA-dependent RNA polymerase catalyzes the transcription of DNA into RNA using the four ribonucleoside triphosphates as substrates. The sequence is that of DNA-directed RNA polymerase subunit beta'' from Solanum lycopersicum (Tomato).